Reading from the N-terminus, the 261-residue chain is Small ribosomal subunit protein uS2 (261 aa).

S2 is subject to N-acetylserine. Residues 212–261 are disordered; sequence QNAAEEAKAEETEEAPAAEAETEWTGETDDVDWADSGATPAAEDAAASNW. Residues 222-244 show a composition bias toward acidic residues; that stretch reads ETEEAPAAEAETEWTGETDDVDW.

The protein belongs to the universal ribosomal protein uS2 family. In terms of assembly, component of the small ribosomal subunit. Mature ribosomes consist of a small (40S) and a large (60S) subunit. The 40S subunit contains about 33 different proteins and 1 molecule of RNA (18S). The 60S subunit contains about 49 different proteins and 3 molecules of RNA (25S, 5.8S and 5S). Interacts with RPS21.

It is found in the cytoplasm. Required for the assembly and/or stability of the 40S ribosomal subunit. Required for the processing of the 20S rRNA-precursor to mature 18S rRNA in a late step of the maturation of 40S ribosomal subunits. The protein is Small ribosomal subunit protein uS2 of Candida tropicalis (Yeast).